The primary structure comprises 164 residues: Methanogen homoaconitase small subunit 2 (164 aa).

A YLRT motif is present at residues 26 to 29 (YLRT).

The protein belongs to the LeuD family. LeuD type 2 subfamily. As to quaternary structure, heterotetramer of 2 HacA and 2 HacB proteins. Cannot form a complex with LeuC.

The enzyme catalyses (2R)-homocitrate = (2R,3S)-homoisocitrate. The catalysed reaction is (2R)-homocitrate = cis-homoaconitate + H2O. It catalyses the reaction (2R,3S)-homoisocitrate = cis-homoaconitate + H2O. It carries out the reaction cis-(homo)2aconitate + H2O = (2R,3S)-iso(homo)2citrate. The enzyme catalyses cis-(homo)3aconitate + H2O = (2R,3S)-iso(homo)3citrate. It functions in the pathway organic acid metabolism; 2-oxosuberate biosynthesis. Functionally, component of a hydro-lyase with broad substrate specificity for cis-unsaturated tricarboxylic acids. Catalyzes both the reversible dehydration of (R)-homocitrate ((R)-2-hydroxybutane-1,2,4-tricarboxylate) to produce cis-homoaconitate ((Z)-but-1-ene-1,2,4-tricarboxylate), and its hydration to homoisocitrate ((1R,2S)-1-hydroxybutane-1,2,4-tricarboxylate). Is also able to hydrate the analogous longer chain substrates cis-homo(2)-aconitate, cis-homo(3)-aconitate. These reactions are part of the biosynthesis pathway of coenzyme B. This chain is Methanogen homoaconitase small subunit 2 (hacB2), found in Methanosarcina acetivorans (strain ATCC 35395 / DSM 2834 / JCM 12185 / C2A).